The sequence spans 785 residues: MLVAGLLLWASLLTGAWPSFPTQDHLPATPRVRLSFKELKATGTAHFFNFLLNTTDYRILLKDEDHDRMYVGSKDYVLSLDLHDINREPLIIHWAASPQRIEECVLSGKDVNGECGNFVRLIQPWNRTHLYVCGTGAYNPMCTYVNRGRRAQATPWTQTQAVRGRGSRATDGALRPMPTAPRQDYIFYLEPERLESGKGKCPYDPKLDTASALINEELYAGVYIDFMGTDAAIFRTLGKQTAMRTDQYNSRWLNDPSFIHAELIPDSAERNDDKLYFFFRERSAEAPQSPAVYARIGRICLNDDGGHCCLVNKWSTFLKARLVCSVPGEDGIETHFDELQDVFVQQTQDVRNPVIYAVFTSSGSVFRGSAVCVYSMADIRMVFNGPFAHKEGPNYQWMPFSGKMPYPRPGTCPGGTFTPSMKSTKDYPDEVINFMRSHPLMYQAVYPLQRRPLVVRTGAPYRLTTIAVDQVDAADGRYEVLFLGTDRGTVQKVIVLPKDDQELEELMLEEVEVFKDPAPVKTMTISSKRQQLYVASAVGVTHLSLHRCQAYGAACADCCLARDPYCAWDGQACSRYTASSKRRSRRQDVRHGNPIRQCRGFNSNANKNAVESVQYGVAGSAAFLECQPRSPQATVKWLFQRDPGDRRREIRAEDRFLRTEQGLLLRALQLSDRGLYSCTATENNFKHVVTRVQLHVLGRDAVHAALFPPLSMSAPPPPGAGPPTPPYQELAQLLAQPEVGLIHQYCQGYWRHVPPSPREAPGAPRSPEPQDQKKPRNRRHHPPDT.

The signal sequence occupies residues 1 to 18; sequence MLVAGLLLWASLLTGAWP. A Sema domain is found at 31-545; it reads RVRLSFKELK…SAVGVTHLSL (515 aa). Asparagine 53 is a glycosylation site (N-linked (GlcNAc...) asparagine). Cysteine 104 and cysteine 115 are oxidised to a cystine. Residue asparagine 126 is glycosylated (N-linked (GlcNAc...) asparagine). 5 cysteine pairs are disulfide-bonded: cysteine 133–cysteine 142, cysteine 300–cysteine 412, cysteine 324–cysteine 372, cysteine 548–cysteine 566, and cysteine 678–cysteine 746. Residues 605–690 enclose the Ig-like C2-type domain; sequence ANKNAVESVQ…TENNFKHVVT (86 aa). The tract at residues 752–785 is disordered; that stretch reads HVPPSPREAPGAPRSPEPQDQKKPRNRRHHPPDT. Residues 775–785 are compositionally biased toward basic residues; it reads PRNRRHHPPDT.

This sequence belongs to the semaphorin family. As to expression, expressed abundantly but differentially in a variety of neural and nonneural tissues. There is high expression in mammary gland, kidney, fetal brain, and lung and lower expression in heart and liver.

Its subcellular location is the secreted. May play a role in cell motility and cell adhesion. This is Semaphorin-3F (SEMA3F) from Homo sapiens (Human).